A 190-amino-acid chain; its full sequence is dTTP/UTP pyrophosphatase (190 aa).

The active-site Proton acceptor is Asp68.

The protein belongs to the Maf family. YhdE subfamily. It depends on a divalent metal cation as a cofactor.

It localises to the cytoplasm. It catalyses the reaction dTTP + H2O = dTMP + diphosphate + H(+). It carries out the reaction UTP + H2O = UMP + diphosphate + H(+). In terms of biological role, nucleoside triphosphate pyrophosphatase that hydrolyzes dTTP and UTP. May have a dual role in cell division arrest and in preventing the incorporation of modified nucleotides into cellular nucleic acids. In Pyrococcus furiosus (strain ATCC 43587 / DSM 3638 / JCM 8422 / Vc1), this protein is dTTP/UTP pyrophosphatase.